The primary structure comprises 274 residues: Hematopoietically-expressed homeobox protein hhex (274 aa).

The homeobox DNA-binding region spans 139–198 (RKGGQVRFSNDQTIELEKKFETQKYLSPPERKRLAKMLQLSERQVKTWFQNRRAKWRRLK). The interval 197-274 (LKQENPQGNK…GDKGFYNCAH (78 aa)) is disordered. Polar residues predominate over residues 237–248 (DEPTSSPTSQET). Acidic residues predominate over residues 249–263 (LDSEVSDDSDQEVDI).

In terms of tissue distribution, expressed in the most dorsoanterior endomesoderm of the blastula and gastrula embryo, and later is restricted to the forming liver diverticulum.

Its subcellular location is the nucleus. In terms of biological role, recognizes the DNA sequence 5'-ATTAA-3'. Transcriptional repressor. Regulates the differentiation of both endothelial and blood cells. Probably plays a role in the proliferation of vascular endothelial cells during blood vessel development. Establishes anterior identity at two levels; acts early to enhance canonical wnt-signaling by repressing expression of tle4, and acts later to inhibit nodal-signaling by directly targeting nodal/nr1 and nodal2/nr2. May play a role in liver development. Induces heart development. The protein is Hematopoietically-expressed homeobox protein hhex of Xenopus tropicalis (Western clawed frog).